Reading from the N-terminus, the 270-residue chain is UPF0246 protein PsycPRwf_0637 (270 aa).

The protein belongs to the UPF0246 family.

The sequence is that of UPF0246 protein PsycPRwf_0637 from Psychrobacter sp. (strain PRwf-1).